The sequence spans 438 residues: Enolase (438 aa).

Residues His159 and Glu168 each coordinate substrate. Glu211 functions as the Proton donor in the catalytic mechanism. Asp246, Glu297, and Asp322 together coordinate Mg(2+). Glu297 and Asp322 together coordinate substrate. Catalysis depends on Lys347, which acts as the Proton acceptor. Substrate-binding positions include 374–377 (SHRS) and Lys398.

This sequence belongs to the enolase family. Homodimer. It depends on Mg(2+) as a cofactor.

It is found in the cytoplasm. It catalyses the reaction (2R)-2-phosphoglycerate = phosphoenolpyruvate + H2O. Its pathway is carbohydrate degradation; glycolysis; pyruvate from D-glyceraldehyde 3-phosphate: step 4/5. The polypeptide is Enolase (emp-7) (Neurospora crassa (strain ATCC 24698 / 74-OR23-1A / CBS 708.71 / DSM 1257 / FGSC 987)).